Consider the following 63-residue polypeptide: Small ribosomal subunit protein eS17 (63 aa).

The protein belongs to the eukaryotic ribosomal protein eS17 family.

This chain is Small ribosomal subunit protein eS17, found in Methanosphaerula palustris (strain ATCC BAA-1556 / DSM 19958 / E1-9c).